Consider the following 181-residue polypeptide: Peptide deformylase (181 aa).

Positions 104 and 146 each coordinate Fe cation. Residue Glu147 is part of the active site. His150 provides a ligand contact to Fe cation.

The protein belongs to the polypeptide deformylase family. Fe(2+) is required as a cofactor.

It carries out the reaction N-terminal N-formyl-L-methionyl-[peptide] + H2O = N-terminal L-methionyl-[peptide] + formate. Removes the formyl group from the N-terminal Met of newly synthesized proteins. Requires at least a dipeptide for an efficient rate of reaction. N-terminal L-methionine is a prerequisite for activity but the enzyme has broad specificity at other positions. This is Peptide deformylase from Helicobacter hepaticus (strain ATCC 51449 / 3B1).